The following is a 391-amino-acid chain: Formate-dependent phosphoribosylglycinamide formyltransferase (391 aa).

Residues 18–19 and Glu78 each bind N(1)-(5-phospho-beta-D-ribosyl)glycinamide; that span reads EL. Residues Arg110, Lys151, 156–161, 191–194, and Glu199 each bind ATP; these read SSGKGQ and EEFI. An ATP-grasp domain is found at 115–305; it reads ELAHEELGIR…EFELHLRAIL (191 aa). Positions 264 and 276 each coordinate Mg(2+). N(1)-(5-phospho-beta-D-ribosyl)glycinamide-binding positions include Asp283, Lys353, and 360-361; that span reads RR.

Belongs to the PurK/PurT family. In terms of assembly, homodimer.

The catalysed reaction is N(1)-(5-phospho-beta-D-ribosyl)glycinamide + formate + ATP = N(2)-formyl-N(1)-(5-phospho-beta-D-ribosyl)glycinamide + ADP + phosphate + H(+). It functions in the pathway purine metabolism; IMP biosynthesis via de novo pathway; N(2)-formyl-N(1)-(5-phospho-D-ribosyl)glycinamide from N(1)-(5-phospho-D-ribosyl)glycinamide (formate route): step 1/1. Functionally, involved in the de novo purine biosynthesis. Catalyzes the transfer of formate to 5-phospho-ribosyl-glycinamide (GAR), producing 5-phospho-ribosyl-N-formylglycinamide (FGAR). Formate is provided by PurU via hydrolysis of 10-formyl-tetrahydrofolate. This Trichormus variabilis (strain ATCC 29413 / PCC 7937) (Anabaena variabilis) protein is Formate-dependent phosphoribosylglycinamide formyltransferase.